Here is a 162-residue protein sequence, read N- to C-terminus: NADH-quinone oxidoreductase subunit I (162 aa).

2 4Fe-4S ferredoxin-type domains span residues 52 to 82 and 93 to 122; these read LRRYPNGEERCIACKLCEAICPAQAITIEAG and TRYDIDMVKCIYCGFCQEACPVDAIVEGPN. 8 residues coordinate [4Fe-4S] cluster: C62, C65, C68, C72, C102, C105, C108, and C112.

Belongs to the complex I 23 kDa subunit family. As to quaternary structure, NDH-1 is composed of 14 different subunits. Subunits NuoA, H, J, K, L, M, N constitute the membrane sector of the complex. Requires [4Fe-4S] cluster as cofactor.

The protein localises to the cell inner membrane. It catalyses the reaction a quinone + NADH + 5 H(+)(in) = a quinol + NAD(+) + 4 H(+)(out). Its function is as follows. NDH-1 shuttles electrons from NADH, via FMN and iron-sulfur (Fe-S) centers, to quinones in the respiratory chain. The immediate electron acceptor for the enzyme in this species is believed to be ubiquinone. Couples the redox reaction to proton translocation (for every two electrons transferred, four hydrogen ions are translocated across the cytoplasmic membrane), and thus conserves the redox energy in a proton gradient. The chain is NADH-quinone oxidoreductase subunit I from Xanthobacter autotrophicus (strain ATCC BAA-1158 / Py2).